Here is a 577-residue protein sequence, read N- to C-terminus: Arginine--tRNA ligase (577 aa).

A 'HIGH' region motif is present at residues 122-132 (PNVAKEMHVGH).

It belongs to the class-I aminoacyl-tRNA synthetase family. In terms of assembly, monomer.

Its subcellular location is the cytoplasm. The catalysed reaction is tRNA(Arg) + L-arginine + ATP = L-arginyl-tRNA(Arg) + AMP + diphosphate. This Shigella flexneri serotype 5b (strain 8401) protein is Arginine--tRNA ligase.